The sequence spans 940 residues: Chordin (940 aa).

An N-terminal signal peptide occupies residues 1–19; it reads MMEGLLWILLSVIIASVHG. The 77-residue stretch at 42–118 folds into the VWFC 1 domain; that stretch reads SGCSFGGRFY…LPGHCCKTCP (77 aa). 4 CHRD domains span residues 162 to 277, 279 to 398, 404 to 519, and 525 to 652; these read TTTD…KHRA, FAET…GRRS, SVLS…LLPY, and RRNE…VPNH. Residues N347 and N430 are each glycosylated (N-linked (GlcNAc...) asparagine). 3 consecutive VWFC domains span residues 689–748, 767–836, and 855–919; these read HSCF…PICE, EGCY…KECP, and RLCK…PECI.

It belongs to the chordin family. As to quaternary structure, interacts with twsg1 and/or bmp4. Cleaved by tolloid proteases; cleavage participates in dorsoventral patterning during early development.

It is found in the secreted. Its function is as follows. Dorsalizing factor. Key developmental protein that dorsalizes early vertebrate embryonic tissues by binding to ventralizing TGF-beta family bone morphogenetic proteins (BMPs) and sequestering them in latent complexes. The sequence is that of Chordin (chd) from Danio rerio (Zebrafish).